Reading from the N-terminus, the 285-residue chain is Acetylglutamate kinase (285 aa).

Substrate contacts are provided by residues 64-65, Arg-86, and Asn-181; that span reads GG.

This sequence belongs to the acetylglutamate kinase family. ArgB subfamily.

It is found in the cytoplasm. The catalysed reaction is N-acetyl-L-glutamate + ATP = N-acetyl-L-glutamyl 5-phosphate + ADP. It participates in amino-acid biosynthesis; L-arginine biosynthesis; N(2)-acetyl-L-ornithine from L-glutamate: step 2/4. Its function is as follows. Catalyzes the ATP-dependent phosphorylation of N-acetyl-L-glutamate. The chain is Acetylglutamate kinase from Clostridium beijerinckii (strain ATCC 51743 / NCIMB 8052) (Clostridium acetobutylicum).